A 643-amino-acid polypeptide reads, in one-letter code: Inorganic pyrophosphatase TTM1 (643 aa).

The transit peptide at 1–15 directs the protein to the mitochondrion; sequence MALDSSVALSPRRRH. The CYTH domain occupies 248–410; sequence NPTYILKSSK…PHTYIEQIQL (163 aa). Residues 618-638 form a helical membrane-spanning segment; it reads LESSTVPILLGLAIGCVGIFA.

It depends on Mg(2+) as a cofactor. Ubiquitously expressed in all tissues, with strong expression detected in senescent leaves.

It is found in the mitochondrion outer membrane. It catalyses the reaction diphosphate + H2O = 2 phosphate + H(+). In terms of biological role, exhibits pyrophosphatase activity with stronger affinity for pyrophosphate (PPi), moderate affinity for ATP and ADP, and weak affinity for tripolyphosphate (PPPi). No activity observed toward uridine substrate. Positively regulates natural and dark-induced leaf senescence. The chain is Inorganic pyrophosphatase TTM1 from Arabidopsis thaliana (Mouse-ear cress).